Consider the following 255-residue polypeptide: Small ribosomal subunit protein uS2 (255 aa).

The disordered stretch occupies residues 232-255 (ASGRDIGASEEAPIEPALEDEAGA).

The protein belongs to the universal ribosomal protein uS2 family.

This is Small ribosomal subunit protein uS2 from Agrobacterium fabrum (strain C58 / ATCC 33970) (Agrobacterium tumefaciens (strain C58)).